Consider the following 1146-residue polypeptide: Transcription-repair-coupling factor (1146 aa).

The region spanning 617 to 778 (DMCQPKAMDR…MNGIRDLSII (162 aa)) is the Helicase ATP-binding domain. Residue 630 to 637 (GDVGFGKT) coordinates ATP. The DEEH box signature appears at 731 to 734 (DEEH). One can recognise a Helicase C-terminal domain in the interval 800-953 (VREAILREIL…GFILATHDLE (154 aa)).

In the N-terminal section; belongs to the UvrB family. It in the C-terminal section; belongs to the helicase family. RecG subfamily.

Its subcellular location is the cytoplasm. Couples transcription and DNA repair by recognizing RNA polymerase (RNAP) stalled at DNA lesions. Mediates ATP-dependent release of RNAP and its truncated transcript from the DNA, and recruitment of nucleotide excision repair machinery to the damaged site. The polypeptide is Transcription-repair-coupling factor (Haemophilus influenzae (strain ATCC 51907 / DSM 11121 / KW20 / Rd)).